The chain runs to 627 residues: (-)-alpha-pinene synthase 2, chloroplastic (627 aa).

A chloroplast-targeting transit peptide spans 1-36; that stretch reads MALVSIAPLASKSCLHKSLSSSAHELKTICRTIPTL. Mg(2+) contacts are provided by aspartate 378, aspartate 382, and aspartate 530. Residues 378 to 382 carry the DDXXD motif motif; sequence DDMYD.

This sequence belongs to the terpene synthase family. Tpsd subfamily. It depends on Mg(2+) as a cofactor. Requires Mn(2+) as cofactor.

It is found in the plastid. It localises to the chloroplast. It carries out the reaction (2E)-geranyl diphosphate = (1S,5S)-beta-pinene + diphosphate. The catalysed reaction is (2E)-geranyl diphosphate = (1S,5S)-alpha-pinene + diphosphate. Its pathway is terpene metabolism; oleoresin biosynthesis. Functionally, terpene synthase (TPS) involved in the biosynthesis of monoterpene natural products included in conifer oleoresin secretions and volatile emissions; these compounds contribute to biotic and abiotic stress defense against herbivores and pathogens. Catalyzes the conversion of (2E)-geranyl diphosphate (GPP) to (1S,5S)-beta-pinene. The chain is (-)-alpha-pinene synthase 2, chloroplastic from Picea glauca (White spruce).